Reading from the N-terminus, the 349-residue chain is Glycerol-3-phosphate dehydrogenase [NAD(+)], cytoplasmic (349 aa).

NAD(+) is bound by residues 10 to 15, F41, and F97; that span reads GSGNWG. Substrate is bound at residue K120. A153 serves as a coordination point for NAD(+). S154 is subject to Phosphoserine. K204 acts as the Proton acceptor in catalysis. Residue R269 participates in NAD(+) binding. 269–270 lines the substrate pocket; that stretch reads RN. At K289 the chain carries N6-succinyllysine. Positions 296 and 298 each coordinate NAD(+). Residue Y326 is modified to Phosphotyrosine.

This sequence belongs to the NAD-dependent glycerol-3-phosphate dehydrogenase family. Homodimer. As to expression, expressed in liver (at protein level).

It localises to the cytoplasm. It catalyses the reaction sn-glycerol 3-phosphate + NAD(+) = dihydroxyacetone phosphate + NADH + H(+). Inhibited by zinc ions and sulfate. Has glycerol-3-phosphate dehydrogenase activity. This Homo sapiens (Human) protein is Glycerol-3-phosphate dehydrogenase [NAD(+)], cytoplasmic.